The sequence spans 628 residues: ATP-binding cassette sub-family F member 2 (628 aa).

Residues 1 to 57 are disordered; sequence MPSDLAKKKAAKKKEAAKARQRPRKGHEENGDAVTEPQVAEEKIEEANGRETTGDGE. Over residues 40–53 the composition is skewed to basic and acidic residues; the sequence is AEEKIEEANGRETT. 2 ABC transporter domains span residues 91–330 and 401–618; these read VHII…ENQM and IMVQ…VDEE. 123–130 contributes to the ATP binding site; the sequence is GLNGIGKS. The residue at position 223 (Thr223) is a Phosphothreonine. N6-acetyllysine is present on Lys309. Residue 435 to 442 coordinates ATP; it reads GPNGAGKS. Ser517 carries the post-translational modification Phosphoserine.

It belongs to the ABC transporter superfamily. ABCF family. EF3 subfamily.

The protein is ATP-binding cassette sub-family F member 2 of Mus musculus (Mouse).